Consider the following 489-residue polypeptide: Trehalose-6-phosphate synthase (489 aa).

Arginine 22 contacts D-glucose 6-phosphate. Residue 42-43 participates in UDP-alpha-D-glucose binding; it reads GG. Residues tyrosine 94 and aspartate 148 each contribute to the D-glucose 6-phosphate site. UDP-alpha-D-glucose-binding residues include arginine 290 and lysine 295. Arginine 328 contributes to the D-glucose 6-phosphate binding site. 393–397 provides a ligand contact to UDP-alpha-D-glucose; it reads LVAKE.

This sequence belongs to the glycosyltransferase 20 family. As to quaternary structure, homotetramer.

The catalysed reaction is ADP-alpha-D-glucose + D-glucose 6-phosphate = alpha,alpha-trehalose 6-phosphate + ADP + H(+). It carries out the reaction CDP-alpha-D-glucose + D-glucose 6-phosphate = alpha,alpha-trehalose 6-phosphate + CDP + H(+). It catalyses the reaction GDP-alpha-D-glucose + D-glucose 6-phosphate = alpha,alpha-trehalose 6-phosphate + GDP + H(+). The enzyme catalyses TDP-alpha-D-glucose + D-glucose 6-phosphate = 5-methyl-UDP + alpha,alpha-trehalose 6-phosphate + H(+). The catalysed reaction is D-glucose 6-phosphate + UDP-alpha-D-glucose = alpha,alpha-trehalose 6-phosphate + UDP + H(+). It functions in the pathway glycan biosynthesis; trehalose biosynthesis. In terms of biological role, probably involved in the osmoprotection via the biosynthesis of trehalose and in the production of glycogen and alpha-glucan via the TreS-Pep2 branch involved in the biosynthesis of maltose-1-phosphate (M1P). Catalyzes the transfer of glucose from UDP-glucose (UDP-Glc) to D-glucose 6-phosphate (Glc-6-P) to form trehalose-6-phosphate. Probably also able to use ADP-Glc, CDP-Glc, GDP-Glc and TDP-Glc as glucosyl donors. In Mycobacterium sp. (strain KMS), this protein is Trehalose-6-phosphate synthase.